Consider the following 242-residue polypeptide: Phosphoribosyl isomerase A (242 aa).

Asp-12 serves as the catalytic Proton acceptor. Residue Asp-131 is the Proton donor of the active site.

The protein belongs to the HisA/HisF family.

It localises to the cytoplasm. The catalysed reaction is 1-(5-phospho-beta-D-ribosyl)-5-[(5-phospho-beta-D-ribosylamino)methylideneamino]imidazole-4-carboxamide = 5-[(5-phospho-1-deoxy-D-ribulos-1-ylimino)methylamino]-1-(5-phospho-beta-D-ribosyl)imidazole-4-carboxamide. It catalyses the reaction N-(5-phospho-beta-D-ribosyl)anthranilate = 1-(2-carboxyphenylamino)-1-deoxy-D-ribulose 5-phosphate. It functions in the pathway amino-acid biosynthesis; L-histidine biosynthesis; L-histidine from 5-phospho-alpha-D-ribose 1-diphosphate: step 4/9. The protein operates within amino-acid biosynthesis; L-tryptophan biosynthesis; L-tryptophan from chorismate: step 3/5. Functionally, involved in both the histidine and tryptophan biosynthetic pathways. This is Phosphoribosyl isomerase A from Streptomyces avermitilis (strain ATCC 31267 / DSM 46492 / JCM 5070 / NBRC 14893 / NCIMB 12804 / NRRL 8165 / MA-4680).